The primary structure comprises 180 residues: F17 fimbrial protein (180 aa).

The signal sequence occupies residues 1–21 (MQKIQFILGILAAASSSATLA). The cysteines at positions 37 and 77 are disulfide-linked.

The protein belongs to the fimbrial protein family.

The protein localises to the fimbrium. Its function is as follows. Fimbriae (also called pili), polar filaments radiating from the surface of the bacterium to a length of 0.5-1.5 micrometers and numbering 100-300 per cell, enable bacteria to colonize the epithelium of specific host organs. This chain is F17 fimbrial protein (F17a-A), found in Escherichia coli.